The chain runs to 501 residues: Putative lon protease homolog (501 aa).

53 to 60 (GPPGIGKS) serves as a coordination point for ATP. Polar residues predominate over residues 481–494 (SSSQRMSQHGYSSE). Positions 481-501 (SSSQRMSQHGYSSENIDRSYM) are disordered.

It belongs to the peptidase S16 family.

This chain is Putative lon protease homolog, found in Methanothermobacter thermautotrophicus (strain ATCC 29096 / DSM 1053 / JCM 10044 / NBRC 100330 / Delta H) (Methanobacterium thermoautotrophicum).